Here is a 440-residue protein sequence, read N- to C-terminus: Chromosome partition protein MukF (440 aa).

Residues 208 to 236 (LSETSGTLRELQDTLEAAGDKLQANLLRI) are leucine-zipper.

It belongs to the MukF family. As to quaternary structure, interacts, and probably forms a ternary complex, with MukE and MukB via its C-terminal region. The complex formation is stimulated by calcium or magnesium. It is required for an interaction between MukE and MukB.

It is found in the cytoplasm. The protein resides in the nucleoid. Functionally, involved in chromosome condensation, segregation and cell cycle progression. May participate in facilitating chromosome segregation by condensation DNA from both sides of a centrally located replisome during cell division. Not required for mini-F plasmid partitioning. Probably acts via its interaction with MukB and MukE. Overexpression results in anucleate cells. It has a calcium binding activity. The protein is Chromosome partition protein MukF of Escherichia coli O157:H7.